Consider the following 70-residue polypeptide: UPF0519 protein B (70 aa).

The protein belongs to the UPF0519 family.

This Dictyostelium discoideum (Social amoeba) protein is UPF0519 protein B (sigN122).